Here is a 119-residue protein sequence, read N- to C-terminus: Large ribosomal subunit protein uL14 (119 aa).

It belongs to the universal ribosomal protein uL14 family. As to quaternary structure, part of the 50S ribosomal subunit. Forms a cluster with proteins L3 and L19. In the 70S ribosome, L14 and L19 interact and together make contacts with the 16S rRNA in bridges B5 and B8.

Functionally, binds to 23S rRNA. Forms part of two intersubunit bridges in the 70S ribosome. In Neorickettsia sennetsu (strain ATCC VR-367 / Miyayama) (Ehrlichia sennetsu), this protein is Large ribosomal subunit protein uL14.